The following is a 122-amino-acid chain: Phosphoribosyl-ATP pyrophosphatase (122 aa).

Belongs to the PRA-PH family.

It localises to the cytoplasm. It carries out the reaction 1-(5-phospho-beta-D-ribosyl)-ATP + H2O = 1-(5-phospho-beta-D-ribosyl)-5'-AMP + diphosphate + H(+). Its pathway is amino-acid biosynthesis; L-histidine biosynthesis; L-histidine from 5-phospho-alpha-D-ribose 1-diphosphate: step 2/9. The sequence is that of Phosphoribosyl-ATP pyrophosphatase from Burkholderia mallei (strain NCTC 10247).